A 266-amino-acid chain; its full sequence is MQGSTRRAGAMTDVHRRFLQLLMTHGVLEEWEVRRLQNHCYKVHDRNATVDKLEDFINNINSVLESLYIEIKKGITEDDGRPIYALVNLATTSVSKMATDFAENELDLFRKALELIVDSETGFASSTNILNLVDQLKGKKMRKKEAEQVLQKFVQSKWLIEKEGEFTLHGRAILEMEQFIRESYPDAVKMCNICHSLLIQGQSCETCGIRMHLPCVAKYFQSTAEPRCPHCNDYWPHDIPEVFDPEKEREAGISKSSRKSLRTRQH.

An interaction with NSMCE3 region spans residues M1–A102. Residues C191–N232 form an RING-type; atypical zinc finger. The interval E246 to H266 is disordered. The segment covering S256 to H266 has biased composition (basic residues).

This sequence belongs to the NSE1 family. In terms of assembly, component of the SMC5-SMC6 complex which consists at least of SMC5, SMC6, NSMCE2, NSMCE1, NSMCE4A or EID3 and NSMCE3. NSMCE1, NSMCE4A or EID3 and NSMCE3 probably form a subcomplex that bridges the head domains of the SMC5-SMC6 heterodimer. Interacts with NSMCE3. Post-translationally, ubiquitinated.

Its subcellular location is the nucleus. It localises to the chromosome. The protein localises to the telomere. The enzyme catalyses S-ubiquitinyl-[E2 ubiquitin-conjugating enzyme]-L-cysteine + [acceptor protein]-L-lysine = [E2 ubiquitin-conjugating enzyme]-L-cysteine + N(6)-ubiquitinyl-[acceptor protein]-L-lysine.. In terms of biological role, RING-type zinc finger-containing E3 ubiquitin ligase that assembles with melanoma antigen protein (MAGE) to catalyze the direct transfer of ubiquitin from E2 ubiquitin-conjugating enzyme to a specific substrate. Within MAGE-RING ubiquitin ligase complex, MAGE stimulates and specifies ubiquitin ligase activity likely through recruitment and/or stabilization of the E2 ubiquitin-conjugating enzyme at the E3:substrate complex. Involved in maintenance of genome integrity, DNA damage response and DNA repair. NSMCE3/MAGEG1 and NSMCE1 ubiquitin ligase are components of SMC5-SMC6 complex and may positively regulate homologous recombination-mediated DNA repair. The protein is Non-structural maintenance of chromosomes element 1 homolog (Nsmce1) of Rattus norvegicus (Rat).